Here is a 486-residue protein sequence, read N- to C-terminus: Uridine/cytidine kinase UKL1, chloroplastic (486 aa).

The N-terminal 47 residues, 1 to 47 (MPEDSSSLDYAMEKASGPHFSGLRFDGLLSSSPPNSSVVSSLRSAVS), are a transit peptide targeting the chloroplast. Residues 31–54 (SSPPNSSVVSSLRSAVSSSSPSSS) are compositionally biased toward low complexity. The interval 31–67 (SSPPNSSVVSSLRSAVSSSSPSSSDPEAPKQPFIIGV) is disordered. A uridine kinase region spans residues 59-264 (PKQPFIIGVS…ITQHIHTKLG (206 aa)). The uracil phosphoribosyltransferase stretch occupies residues 274 to 486 (NVYVIQSTFQ…RYFGTDEEDQ (213 aa)). GTP-binding positions include K298, R307, and 341–344 (CKKL). Residues R351 and R376 each contribute to the 5-phospho-alpha-D-ribose 1-diphosphate site. GTP is bound at residue R396. 5-phospho-alpha-D-ribose 1-diphosphate contacts are provided by residues D402, 407 to 410 (TGNS), and E473. Uracil is bound at residue 472–474 (GEF).

In the N-terminal section; belongs to the uridine kinase family. It in the C-terminal section; belongs to the UPRTase family. As to expression, expressed in roots, leaves and stems.

Its subcellular location is the plastid. It localises to the chloroplast. The protein localises to the cytoplasm. The enzyme catalyses cytidine + ATP = CMP + ADP + H(+). It catalyses the reaction uridine + ATP = UMP + ADP + H(+). Its pathway is pyrimidine metabolism; CTP biosynthesis via salvage pathway; CTP from cytidine: step 1/3. It functions in the pathway pyrimidine metabolism; UMP biosynthesis via salvage pathway; UMP from uridine: step 1/1. Involved in the pyrimidine salvage pathway. Phosphorylates uridine to uridine monophosphate (UMP). Phosphorylates cytidine to cytidine monophosphate (CMP). Does not possess uracil phosphoribosyltransferase (UPRTase) activity that catalyzes the conversion of uracil and 5-phospho-alpha-D-ribose 1-diphosphate (PRPP) to UMP and diphosphate. The polypeptide is Uridine/cytidine kinase UKL1, chloroplastic (Arabidopsis thaliana (Mouse-ear cress)).